The following is a 61-amino-acid chain: Large ribosomal subunit protein uL30 (61 aa).

This sequence belongs to the universal ribosomal protein uL30 family. As to quaternary structure, part of the 50S ribosomal subunit.

In Colwellia psychrerythraea (strain 34H / ATCC BAA-681) (Vibrio psychroerythus), this protein is Large ribosomal subunit protein uL30.